The primary structure comprises 4007 residues: MVYTHSPKEPIAIIGTGCRFPGGSTSPSKLWDLLYSPRDLTREVPAESRFNPKGFYNVDGEHHGASNATNAYFIEEDPRYFDAGFFSIAPREAESIDPQQRLLLETVYEAMENAGLTLNGMRGSATSAYMGAMSADYTDTQLRDIENVSKYMITGTSRALLANRLSYFFDWKGPSISVDTACSSSLAAVHLGVQALRAGECTISCVGGSNIILNPDCYLAATSLHLLSPTGRSQMWDQAADGYARGEGVCVFFMKTLSQALRDGDRIDALLRETCVNSDGRTQGIALPSAEAQVSLMRTAYKNAGLDLSKAEDRPQYIEAHGTGTQAGDPREAYAIATTFFPPGEDHSHRPKLVVGSVKTIIGHTEGCAGIAGILKAVLAMRHKTIPPNQHFHNLNPSVKPSFKHLSIATSPQPWPVVPPDTPLRASVNGFGSGGTNCHAIVESYVPEIHDNGPWGKPKEMTQVPNGVAAPETDFSPIPLIFSASSGTALRAMLERYQEYLERTEVSLLRLAMTLNSHRSTLPVRVSIPGTSKADVLAAIRTQLAKVGSNPGAEIGTRSSVPEFDHVRRPKILGVFTGQGAQWAGMGQGLMAKSALFRQVIEVMEEAMAQLPDGPEWSLKEEIMKPPKTSRLGEAEISLPVCAALQVGLVKVLRSAGITFSMVVGHSGGEIGSAYAAGKISEVDAIKIAYYRGVYTKLAIGKDGKKGGMIAVGFGYEDGLNFCAMEQFADRLTVAASNSPKSVTLSGDLDAVHEAKELLDAEGVFNRVLRLDTAYHSPHMYPCAAPYLAAIERCGLVAGKSNGTAWASSVYDDNRMMTSAQDKDLEAAYWKDNLIGRVLFSQAVERALDEGNGDFDLALEIGPHPSLKGPTLETIRHKIGSEIPYSGVLDRKADDILALSTALGFSWLTLGSGVVDFAGYVSGFDPSNASILNAPALPDLPTYPWDHKKVLYRESRLNKNVRHRVDPPHPLLGSRTPDDTDYEPRWRNFLIMEELPWLRDHCVQGQIIVPAATYSVMALEAAKVLCRGKHVQSIELSDVAILRPIVLDEASDGTETLFSVRSDLDSNKKHEDEIHAQFTLSAGAMDDRHLRTAATGHIRITLAAEAPSSFPNGPRPTELDLLPTSVDRFYASMDEIGLSYSGPFRAMTSMKRRLNVASATVAVDRDLAGTIPVHPTWLDACFQTFLAAFAAPRDGSLWTAFMPTAIGRMVFSPSSTSQVPGRSVTVDAHITDFAPGYQVSLPTLTGDMSIFNSETNQLQIQIEDFVMSSFLPASEKDDRRFYLQNVWGQEMLSGALCAAAERCVAPTESESKIIDTCEKAVHYYLSKLKAAGLLDQWADKNPGLRSLMNEIEARVTSIPEQSDLVSMLGEVGEHIDLVLVRTIGESLLNSPSEGLGPITPSPMGALISRWHHEGLGFAQLQRHFVSAAKQISHQHANLRILQVGPSSPGLVRSVCQELGRSLERYTLVDDSEQTIEEMKSALAADQLRVDFTTASVENGIDAVNHLTSAGGFDLVIVHKAFTKQVTALKTVRNLLRPGGFMLMMAATGAQLRFPFMLMSTLPSLDDERLAQTKFINATRAETHDLLRQIGFSGVDSIALDNVPDKHTFSVVVSQALDDHIAFLRSPLTSPSPVPLSGNLLVVGGFSADIAKLATAIQSLVSTVWHGDIINVRTLAELDDEASTVEAVLSLTDLDRPVLEDVRAPTFRGLQRLFSEAKTVLWITHRAKADNPYHNATIGLGRSFQSENPQKVLQFLDVDTLDGVESAIAETFLKLIGGVNMRNSNPADPTRLWTIEPEVSLENGKYLVPRLFPDTERNDRLNALRRKVQTQVSVETQPISLSRSAQSDQVAYTAEAVHFHRDLADGATDPVTIQVELCSTEPVIPNIDNEDLFCFVGRTSEGARLVGLSTSNSSVVKVPREWTIPVDKHTSHDQGAFVLELRNEIQSLVIAKSIPPGSTTLIYEPDPHLAASLQRPGRPATSSVSFRARSTWSIPGSHILIDPHASRKDIQAKVPPKTRMLIHMEQGPETCEFLALRQALPPYATVVAFNDLAADDVNPRELLAEALSIIRGDSQSTKVPFDPSSVVKASALVAGGTREHANAAVVDWTGAQSITLSPRPVDTRNLFSPNKTYLLVGLTGHIGQSICRWMVQGGARHIVVTSRHPEKQGQLWREELLRQGVNIVIEAADVTKEHDLLDLRARIVSSMPPVGGIANGAMVLDDKLFIDMPFESFQAAMKPKVQGSIYLEEVFSADNLDFFLFFSSISVMTGQRTQANYVAANNFMVAMAERRRARGLPASVIDIGMVVGIGVIQRSQNDKGVSAMENSIRQMDYMPVSETDLHHLLAEAILVGQRDESPELITGLETYKPVEGEAPFWHHNVRFSHLITDPDAAQAGADSAGSAQKSLKEMLLSSGGPEEARKVMENALLQYLASSLKLSRETIYTDVPIIDLGIDSLVAVQIRNWTWAEAGYDLPVLKILGGSSVTQICDEVVASLSFDKSSIAAAKVDSQAAPAHKLRPWDKPSADTKRTDSIAPVPRSQIAANGPNGLPNGALKKASKLAVKVRPLWTTQAGGKDTKKGPRPAPIRIQPLSLGQSRLYFLSQYMDDDRVLNCTISYALSGKLDVSKLEQSLIQVVQRHEALRTSFYTDEKDGKPMQGLLEKSPFRLRVVPGVSASSDVETEFNLIRYRPYDLEQADTFAATLLSHSPDSHTLICGYHHIIMDGVSWQIFQKDLAMFYNNSGIADSAKHLPAQYSEFTRKQQEDLSCGAYAERLRFFQDQFREPVESLPLFPFAKVGTRKVVKQYAVQEATTHLNAKVVSAIKQASQTSRTTPFHFYLSAFQVLLHRLLETDKMCIGVVDANRSDQNFVNTIGFFLETIPLWFKVNSEQRFVELLKETRTKAYAALAQTGVPTEEILRACGVASSTTETPLFQVCFNYRMGAGRTAALQGVEMKFLDYVDAQNPFDLVATVDDLDDGTAMITLYLQDYLYDQEGAQLLATMYANVLQVLAENPERLVGSVSISNATLEDEGVKLGTGPILDLVAPSTPTLSKIFHTWVDKDPHALAVKDTTGKSKTYVQLAERANAIAASLLNAGAAPSIPIGVLLDPGVDTIATILAILRIGAAYVPLDTRSSDAVLSDILQESQPGIVIHHSATAPRSQILLKASAKTKLVTLNAVPQKTIRKIQDVSVPEGLAMILYTSGSTGSPKGIPLTNANIRTPILGVSERVPLGREVVLQQSGQGFDAAVYQIFIALANGGTLIMVDNRDDPAKVAALMAQESVTCTTHIVSEMQALLKYGYDELRNCSSWRIAMVAGEAFTVHLLDQFRALNRPDLKVINAYGPTEASICSSLGEVSFNRISSSETSIPIGKAIPNYGTYIVDQHCKPVPLGWPGEVAIAGPGVASGYLNLGELTQAKFRSAATLGEVFGSDCLYLTGDRGRMLSDGSIVLSGRVDGDDQVKIRGHRVQLGDVARALVQASRGVFADAAVILKGDDTSNPQLVAYVVFSRTSNIQDQQTYLRQLNQDLPVPAYMRPAITIPLDTLPVTDRGKLDSKKLASLPLPSISVDYEEDEQLTPTEARLRDVWKNVLGDIASSIPIRRSSDFFSVGGNSLILLALKAEIAQVFGVGLSVSELFQASTLELLAARLDGTSLLAQINWEEETAPDETQFTLPPPINGINGHGSSNGHAQGISVLLTGATGFLGGHILRQLVQLPSVEHVHCVAIRPNKVDVRRQLSVESPKIIRYSGDLALPNMGMSESEFSDLFKSIDVIVHNGAEVSHMKNYRSLRAANFLSTVGLARAAVSRGIPIHYISTGGVARLSVADEQPEASLAAFHPPIDGSDGYVASKWASEVFLEKVQRRFQGQVWIHRPSSITGDDVPDNDIAHSLLKFSRELGAVPELTGSGFFDFINVETVSNNIAASVVRSSEKSGGGLIYLHQSGEQVIPVGDLQKYVEELEGRPLQVLPLKEWVDLSIRKGLDEVLGSYMLASKGVIRAPLLQRGPHVE.

Residues 8-444 (KEPIAIIGTG…GTNCHAIVES (437 aa)) enclose the Ketosynthase family 3 (KS3) domain. Catalysis depends on for beta-ketoacyl synthase activity residues C182, H321, and H364. The interval 575–897 (VFTGQGAQWA…VLDRKADDIL (323 aa)) is malonyl-CoA:ACP transacylase (MAT) domain. Residues 969-1105 (HPLLGSRTPD…GHIRITLAAE (137 aa)) form an N-terminal hotdog fold region. Residues 969 to 1147 (HPLLGSRTPD…LSYSGPFRAM (179 aa)) form a dehydratase (DH) domain region. The PKS/mFAS DH domain occupies 969 to 1276 (HPLLGSRTPD…MSSFLPASEK (308 aa)). H1001 serves as the catalytic Proton acceptor; for dehydratase activity. The segment at 1120 to 1276 (DLLPTSVDRF…MSSFLPASEK (157 aa)) is C-terminal hotdog fold. D1179 serves as the catalytic Proton donor; for dehydratase activity. A ketoreductase (KR) domain region spans residues 2131 to 2305 (TYLLVGLTGH…PASVIDIGMV (175 aa)). The Carrier 1 domain maps to 2418–2495 (EARKVMENAL…QICDEVVASL (78 aa)). Position 2455 is an O-(pantetheine 4'-phosphoryl)serine (S2455). The segment at 2513–2550 (PAHKLRPWDKPSADTKRTDSIAPVPRSQIAANGPNGLP) is disordered. Basic and acidic residues predominate over residues 2518-2531 (RPWDKPSADTKRTD). Residues 2589–2885 (QPLSLGQSRL…LETIPLWFKV (297 aa)) are condensation (C) domain. The segment at 3076 to 3478 (TYVQLAERAN…LGDVARALVQ (403 aa)) is adenylation (A) domain. Positions 3576–3652 (TPTEARLRDV…LLAARLDGTS (77 aa)) constitute a Carrier 2 domain. The residue at position 3612 (S3612) is an O-(pantetheine 4'-phosphoryl)serine. The tract at residues 3696–3920 (LTGATGFLGG…INVETVSNNI (225 aa)) is reductase (R) domain.

The protein in the C-terminal section; belongs to the NRP synthetase family.

It participates in secondary metabolite biosynthesis. PKS-NRPS hybrid synthetase; part of the gene cluster that mediates the biosynthesis of pseurotin A, a competitive inhibitor of chitin synthase and an inducer of nerve-cell proliferation. The PKS-NRPS hybrid synthetase psoA is responsible for the biosynthesis of azaspirene, one of the first intermediates having the 1-oxa-7-azaspiro[4,4]-non-2-ene-4,6-dione core of pseurotin, via condensation of one acetyl-CoA, 4 malonyl-CoA, and a L-phenylalanine molecule. The dual-functional monooxygenase/methyltransferase psoF seems to be involved in the addition of the C3 methyl group onto the pseurotin scaffold. Azaspirene is then converted to synerazol through 4 steps including oxidation of C17 by the cytochrome P450 monooxygenase psoD, O-methylation of the hydroxy group of C8 by the methyltransferase psoC, and the trans-to-cis isomerization of the C13 olefin by the glutathione S-transferase psoE. The fourth step of synerazol production is performed by the dual-functional monooxygenase/methyltransferase psoF which seems to catalyze the epoxidation of the intermediate deepoxy-synerazol. Synerazol can be attacked by a water molecule nonenzymatically at two different positions to yield two diol products, pseurotin A and pseurotin D. This is PKS-NRPS hybrid synthetase psoA from Aspergillus fumigatus (strain ATCC MYA-4609 / CBS 101355 / FGSC A1100 / Af293) (Neosartorya fumigata).